The following is a 70-amino-acid chain: uncharacterized protein (70 aa).

The protein resides in the plastid. The protein localises to the chloroplast. This is an uncharacterized protein from Mesostigma viride (Green alga).